We begin with the raw amino-acid sequence, 534 residues long: uncharacterized protein (534 aa).

Disordered stretches follow at residues Met1–Gly93, Ser123–Ala260, Ala313–Ser349, and Pro383–Pro505. Pro residues predominate over residues Gly35–Gly45. A phosphoserine mark is found at Ser87 and Ser123. Low complexity predominate over residues Arg145–Gly161. Residues Ser230–Arg239 are compositionally biased toward basic and acidic residues.

This is an uncharacterized protein from Bos taurus (Bovine).